A 217-amino-acid polypeptide reads, in one-letter code: Ras-related protein Rab-19 (217 aa).

Residues Ser26, Val28, Gly29, Lys30, Thr31, Cys32, Tyr42, Glu44, and Thr49 each contribute to the GTP site. Residue Thr31 coordinates Mg(2+). The Switch 1 motif lies at 39-54 (SGVYMEAQQNTIGVDF). Mg(2+) is bound by residues Thr49 and Asp72. The Switch 2 signature appears at 74–89 (AGQERFRTITQSYYRS). Residues Gly75, Asn130, Lys131, Asp133, Ser161, Ala162, and Lys163 each contribute to the GTP site. 2 S-geranylgeranyl cysteine lipidation sites follow: Cys215 and Cys217. Cys217 carries the post-translational modification Cysteine methyl ester.

This sequence belongs to the small GTPase superfamily. Rab family. Mg(2+) is required as a cofactor.

It localises to the cell membrane. It carries out the reaction GTP + H2O = GDP + phosphate + H(+). Regulated by guanine nucleotide exchange factors (GEFs) which promote the exchange of bound GDP for free GTP. Regulated by GTPase activating proteins (GAPs) which increase the GTP hydrolysis activity. Inhibited by GDP dissociation inhibitors (GDIs). In terms of biological role, the small GTPases Rab are key regulators of intracellular membrane trafficking, from the formation of transport vesicles to their fusion with membranes. Rabs cycle between an inactive GDP-bound form and an active GTP-bound form that is able to recruit to membranes different set of downstream effectors directly responsible for vesicle formation, movement, tethering and fusion. The polypeptide is Ras-related protein Rab-19 (RAB19) (Bos taurus (Bovine)).